The following is a 390-amino-acid chain: Calcium-binding and spermatid-specific protein 1 (390 aa).

Disordered regions lie at residues 1–23, 82–109, and 146–225; these read MAED…TPTE, ASLK…KESI, and TIDA…TIPD. Positions 162–174 are enriched in acidic residues; the sequence is ETQEDSSANDEDT. Positions 184–193 are enriched in low complexity; it reads TDVSSSTSSD. A phosphoserine mark is found at Ser-251 and Ser-267. Thr-280 is subject to Phosphothreonine; by CK2. Ser-312 carries the phosphoserine modification. Basic and acidic residues predominate over residues 330-344; that stretch reads EPHVDTKNSPEKDAA. The tract at residues 330 to 390 is disordered; it reads EPHVDTKNSP…LKEEPDELMM (61 aa). 4 positions are modified to phosphoserine: Ser-346, Ser-356, Ser-371, and Ser-375. Positions 346 to 364 are enriched in polar residues; it reads SVTNVTEEFPSVTSVVEQS.

As to expression, expressed in seminiferous tubules of the testis in step 10 spermatids (stage X), subsequently increasing to reach maximal levels of step 18 elongated spermatids (stage VI) (at protein level). Strongly expressed in testis. Weakly expressed in olfactory epithelium. Expressed in spermatids of seminiferous tubules at steps 4-14 (stages IV to XIV of the seminiferous epithelium classification).

The protein localises to the cytoplasm. Its subcellular location is the mitochondrion inner membrane. It localises to the cell projection. It is found in the cilium. The protein resides in the flagellum. The protein localises to the cytoplasmic vesicle. Its subcellular location is the secretory vesicle. It localises to the acrosome. Functionally, calcium-binding protein. Essential for maintaining the structural integrity of the sperm flagella. In Rattus norvegicus (Rat), this protein is Calcium-binding and spermatid-specific protein 1 (Cabs1).